A 1431-amino-acid chain; its full sequence is Probable serine/threonine-protein kinase irlA (1431 aa).

A compositionally biased stretch (basic residues) spans 1-10 (MTKPIFKSKT). Disordered stretches follow at residues 1 to 81 (MTKP…EKEE) and 736 to 879 (KREK…NNNK). A compositionally biased stretch (acidic residues) spans 25-43 (NEDEEEEEGGEEGGEEEEI). The segment covering 46-67 (NKNSNNSSSNSNNNNNDNNNNN) has biased composition (low complexity). Coiled coils occupy residues 57–97 (NNNN…LDME) and 715–759 (KKRS…NNNN). Residues 68-81 (GEERKVEKEEEKEE) are compositionally biased toward basic and acidic residues. The segment covering 738–749 (EKKKQKDKKKNK) has biased composition (basic residues). Over residues 750–776 (SNQNQKNNNNQNNQSNNNKINSPSSNK) the composition is skewed to low complexity. The span at 777-791 (LTQNVTPPSSPVNII) shows a compositional bias: polar residues. Over residues 792–812 (TSSSTTSSSTSSTTSSTTSST) the composition is skewed to low complexity. Over residues 821-838 (TLPIKTSSPTKPESQKPS) the composition is skewed to polar residues. A compositionally biased stretch (low complexity) spans 854-878 (NNNNNNNNNNNNNNNNNNNNNNNNN). Residues 860 to 971 (NNNNNNNNNN…QESIQLNQTL (112 aa)) adopt a coiled-coil conformation. The Protein kinase domain maps to 987-1261 (RDENNIIGRG…IDTILNHPLF (275 aa)). ATP is bound by residues 993–1001 (IGRGSNGTL) and lysine 1016. Residue aspartate 1130 is the Proton acceptor of the active site. One can recognise a KEN domain in the interval 1264-1431 (TNEKIKFYES…NSKDYLNIKF (168 aa)).

This sequence belongs to the protein kinase superfamily. Ser/Thr protein kinase family.

It carries out the reaction L-seryl-[protein] + ATP = O-phospho-L-seryl-[protein] + ADP + H(+). The enzyme catalyses L-threonyl-[protein] + ATP = O-phospho-L-threonyl-[protein] + ADP + H(+). The polypeptide is Probable serine/threonine-protein kinase irlA (irlA) (Dictyostelium discoideum (Social amoeba)).